Reading from the N-terminus, the 429-residue chain is Glutamate-1-semialdehyde 2,1-aminomutase (429 aa).

Lys265 bears the N6-(pyridoxal phosphate)lysine mark.

Belongs to the class-III pyridoxal-phosphate-dependent aminotransferase family. HemL subfamily. In terms of assembly, homodimer. Pyridoxal 5'-phosphate is required as a cofactor.

The protein localises to the cytoplasm. The enzyme catalyses (S)-4-amino-5-oxopentanoate = 5-aminolevulinate. Its pathway is porphyrin-containing compound metabolism; protoporphyrin-IX biosynthesis; 5-aminolevulinate from L-glutamyl-tRNA(Glu): step 2/2. The sequence is that of Glutamate-1-semialdehyde 2,1-aminomutase from Shewanella pealeana (strain ATCC 700345 / ANG-SQ1).